The chain runs to 292 residues: Type II methyltransferase M.SmaI (292 aa).

Positions 110–130 (WRDKDDKNKGRAMSYRPPTPE) are disordered.

Belongs to the N(4)/N(6)-methyltransferase family. N(4) subfamily.

The enzyme catalyses a 2'-deoxycytidine in DNA + S-adenosyl-L-methionine = an N(4)-methyl-2'-deoxycytidine in DNA + S-adenosyl-L-homocysteine + H(+). Functionally, a beta subtype methylase thatnrecognizes the double-stranded sequence 5'-CCCGGG-3', methylates C-2 on both strands, and protects the DNA from cleavage by the SmaI endonuclease. The protein is Type II methyltransferase M.SmaI (smaIM) of Serratia marcescens.